A 231-amino-acid chain; its full sequence is 4-hydroxy-tetrahydrodipicolinate reductase (231 aa).

NAD(+) is bound by residues D33, 68–70 (CTT), and 92–95 (SSNT). The active-site Proton donor/acceptor is H124. H125 is a (S)-2,3,4,5-tetrahydrodipicolinate binding site. K128 (proton donor) is an active-site residue. Residue 134–135 (GT) coordinates (S)-2,3,4,5-tetrahydrodipicolinate.

This sequence belongs to the DapB family.

It localises to the cytoplasm. It carries out the reaction (S)-2,3,4,5-tetrahydrodipicolinate + NAD(+) + H2O = (2S,4S)-4-hydroxy-2,3,4,5-tetrahydrodipicolinate + NADH + H(+). The catalysed reaction is (S)-2,3,4,5-tetrahydrodipicolinate + NADP(+) + H2O = (2S,4S)-4-hydroxy-2,3,4,5-tetrahydrodipicolinate + NADPH + H(+). The protein operates within amino-acid biosynthesis; L-lysine biosynthesis via DAP pathway; (S)-tetrahydrodipicolinate from L-aspartate: step 4/4. Its function is as follows. Catalyzes the conversion of 4-hydroxy-tetrahydrodipicolinate (HTPA) to tetrahydrodipicolinate. The sequence is that of 4-hydroxy-tetrahydrodipicolinate reductase from Brachyspira hyodysenteriae (strain ATCC 49526 / WA1).